The sequence spans 689 residues: Glycine--tRNA ligase beta subunit (689 aa).

Belongs to the class-II aminoacyl-tRNA synthetase family. Tetramer of two alpha and two beta subunits.

It is found in the cytoplasm. It carries out the reaction tRNA(Gly) + glycine + ATP = glycyl-tRNA(Gly) + AMP + diphosphate. This Actinobacillus pleuropneumoniae serotype 5b (strain L20) protein is Glycine--tRNA ligase beta subunit.